A 471-amino-acid polypeptide reads, in one-letter code: Coronin-6 (471 aa).

5 WD repeats span residues 79–119 (GHTG…PVRN), 129–169 (GHSK…VLLS), 173–212 (IHPDVIHSVCWNSNGSLLATTCKDKTLRIIDPRKSQVVAE), 216–259 (PHEG…EPVA), and 264–304 (DTSN…PFVH). The segment at 410–433 (ILDVRPPASPRRSQSASEAPLSQH) is disordered. Over residues 419 to 429 (PRRSQSASEAP) the composition is skewed to low complexity. Residues 426–468 (SEAPLSQHTLETLLEEIKALRDRVQAQEERITALENMLCELVD) are a coiled coil.

The sequence is that of Coronin-6 (Coro6) from Mus musculus (Mouse).